A 379-amino-acid polypeptide reads, in one-letter code: Chaperone protein DnaJ (379 aa).

A J domain is found at 5–69; sequence EYYERLGVDK…QKRAAYDQYG (65 aa). A CR-type zinc finger spans residues 141–223; sequence GVEKQVKYNR…CHGSGHEKVA (83 aa). Positions 154, 157, 171, 174, 197, 200, 211, and 214 each coordinate Zn(2+). CXXCXGXG motif repeat units lie at residues 154–161, 171–178, 197–204, and 211–218; these read CHTCGGSG, CHKCGGRG, CDVCHGTG, and CTTCHGSG.

The protein belongs to the DnaJ family. Homodimer. It depends on Zn(2+) as a cofactor.

The protein resides in the cytoplasm. Participates actively in the response to hyperosmotic and heat shock by preventing the aggregation of stress-denatured proteins and by disaggregating proteins, also in an autonomous, DnaK-independent fashion. Unfolded proteins bind initially to DnaJ; upon interaction with the DnaJ-bound protein, DnaK hydrolyzes its bound ATP, resulting in the formation of a stable complex. GrpE releases ADP from DnaK; ATP binding to DnaK triggers the release of the substrate protein, thus completing the reaction cycle. Several rounds of ATP-dependent interactions between DnaJ, DnaK and GrpE are required for fully efficient folding. Also involved, together with DnaK and GrpE, in the DNA replication of plasmids through activation of initiation proteins. The polypeptide is Chaperone protein DnaJ (Lactococcus lactis subsp. cremoris (strain MG1363)).